Here is a 129-residue protein sequence, read N- to C-terminus: Thioredoxin-like 3-3 (129 aa).

Over residues 1–10 (MEEGEAKKTG) the composition is skewed to basic and acidic residues. A disordered region spans residues 1-30 (MEEGEAKKTGLEGTGLSLPGSSHGNLRSAG). The Thioredoxin domain occupies 7-129 (KKTGLEGTGL…RLHDRLWLHS (123 aa)). Over residues 19–30 (PGSSHGNLRSAG) the composition is skewed to polar residues. Catalysis depends on nucleophile residues Cys58 and Cys61. A disulfide bridge links Cys58 with Cys61.

The protein belongs to the thioredoxin family.

In terms of biological role, probable thiol-disulfide oxidoreductase that may participate in various redox reactions. This chain is Thioredoxin-like 3-3, found in Oryza sativa subsp. japonica (Rice).